Here is a 370-residue protein sequence, read N- to C-terminus: Aminomethyltransferase (370 aa).

The protein belongs to the GcvT family. In terms of assembly, the glycine cleavage system is composed of four proteins: P, T, L and H.

It catalyses the reaction N(6)-[(R)-S(8)-aminomethyldihydrolipoyl]-L-lysyl-[protein] + (6S)-5,6,7,8-tetrahydrofolate = N(6)-[(R)-dihydrolipoyl]-L-lysyl-[protein] + (6R)-5,10-methylene-5,6,7,8-tetrahydrofolate + NH4(+). Its function is as follows. The glycine cleavage system catalyzes the degradation of glycine. This Clostridium botulinum (strain ATCC 19397 / Type A) protein is Aminomethyltransferase.